The following is a 396-amino-acid chain: Elongation factor Tu (396 aa).

The tr-type G domain maps to 10–206 (KPHCNIGTIG…AVDAYIPQPE (197 aa)). The segment at 19-26 (GHVDHGKT) is G1. Position 19–26 (19–26 (GHVDHGKT)) interacts with GTP. Threonine 26 contacts Mg(2+). Residues 60–64 (GITIS) form a G2 region. Residues 81–84 (DCPG) form a G3 region. GTP is bound by residues 81–85 (DCPGH) and 136–139 (NKCD). Positions 136 to 139 (NKCD) are G4. The G5 stretch occupies residues 174–176 (SAL).

The protein belongs to the TRAFAC class translation factor GTPase superfamily. Classic translation factor GTPase family. EF-Tu/EF-1A subfamily. Monomer.

Its subcellular location is the cytoplasm. The catalysed reaction is GTP + H2O = GDP + phosphate + H(+). Its function is as follows. GTP hydrolase that promotes the GTP-dependent binding of aminoacyl-tRNA to the A-site of ribosomes during protein biosynthesis. This is Elongation factor Tu from Rhodopseudomonas palustris (strain BisB18).